Here is a 1366-residue protein sequence, read N- to C-terminus: MTSSKPKKTSRVRKTTKNSKKNNPLTMPALAKTPPSFKNKVVDKKALKNLVSWAYKTHGTAVTAAMADNLKDLGFKYATQAAVSISVDDLKVPEAKQDLIGQAEEQISATEECYRLGEITEVERHTKVIDTWTETNERLVDAVKNNFNQNDPLNSVWMMANSGARGNMSQVRQLVGMRGLMANPQGEIIDLPIRTNFREGLTVTEYVISSYGARKGLVDTALRTADSGYLTRRLVDVAQDVIVREEDCGTERSIVVEAEDGKFGARLLGRLTAEDIFDAEENLVVPQNTAIDPALSGEIEKASINKVKIRSPLTCEANRSVCRRCYGWALAHNHLVDLGEAVGIIAAQSIGEPGTQLTMRTFHTGGVSTAESGVVRSKITGKVEFSSKAKVRGYRTPHGVEAKQAEVDFILKIVPQGSNSGKPQKIEVSSGSLLFVEDGEEINSDITVAQIIAGTVKKSVEKATKDVICDLAGQVRYDKVIQPKEVTDRQGNITLKAQRLGRLWVLAGDVYNLPPNARPVISSGKSVDEGTVLAEASQSSEFGGQVRLRESVGDSREVQIVTTSMSLTNFKLIEESTHSGQIYNLESSDGISYRLNISPGSKISNGEVIADLTDERFRTKTGGLVKYAPGLSVKKARSSKNGFEVSQGGTLLWIPQETHEINKDISLLMIEDMKWIEAGTEVVKDIFSQTSGIVTVTQKNDILREITVRNGTFHECDDEEVLNRFTEEGNLVNPGEKILDGVDNKEILFVQKLETPKCRGLLLRTVEEFTIPDQAELPQLSHVKQEKGPHLGLKAIQRLTYKDGELIKSVEGVELLRTHLSIESFDATPQMTIDVESIEDKNDASINRLNLVILESILVRRDTLSDSSHGSTHTELQVKNDQLVKAGDVIATTQILCKEKGFVQLPNVVEDEPIRRLIVEREEDKIKIKISDKAVVKIGDRVVDGDPISKSVKSTSCGEIEEISNSSVTLRLGRPYMVSPDSVLHVKDGDLVLRGDGLALLVFERQKTGDIVQGLPRIEELLEARRPRDSAILSKKSGIVQIKKGNDEESVSLSVIEKDDFVNEYQLLIGKNIMVSDGQQVTGGESLTDGPINPHELLDCYFNDLKDQKPLIEAARESISKLQRSMVSEVQNVYKSQGVAIDDKHIEVIVRQMTSKVRIEDAGDTTLLPGELIELRQVEDTNQAMAITGGAPAEFTPVLLGITKASLNTDSFISAASFQETTRVLTEAAIEGKSDWLRGLKENVIIGRLIPAGTGFSGFVEELSSEAGPHPDILAEESGGYRRAQNLRPDYTVDMPQSPSVSSTAILDDPSDEDLETTRNRHGIDPSSSNFAAFARPNAENQFSEDQLPDPAALEGLQEEGLLSDE.

A compositionally biased stretch (basic residues) spans 1–20 (MTSSKPKKTSRVRKTTKNSK). Positions 1–34 (MTSSKPKKTSRVRKTTKNSKKNNPLTMPALAKTP) are disordered. Residues Cys-248, Cys-315, Cys-322, and Cys-325 each coordinate Zn(2+). The disordered stretch occupies residues 1291–1366 (YTVDMPQSPS…LQEEGLLSDE (76 aa)). Over residues 1295 to 1305 (MPQSPSVSSTA) the composition is skewed to polar residues. A compositionally biased stretch (low complexity) spans 1354–1366 (LEGLQEEGLLSDE).

Belongs to the RNA polymerase beta' chain family. RpoC2 subfamily. In cyanobacteria the RNAP catalytic core is composed of 2 alpha, 1 beta, 1 beta', 1 gamma and 1 omega subunit. When a sigma factor is associated with the core the holoenzyme is formed, which can initiate transcription. Requires Zn(2+) as cofactor.

The catalysed reaction is RNA(n) + a ribonucleoside 5'-triphosphate = RNA(n+1) + diphosphate. DNA-dependent RNA polymerase catalyzes the transcription of DNA into RNA using the four ribonucleoside triphosphates as substrates. The sequence is that of DNA-directed RNA polymerase subunit beta' from Prochlorococcus marinus (strain MIT 9301).